A 268-amino-acid polypeptide reads, in one-letter code: Imidazole glycerol phosphate synthase subunit HisF (268 aa).

Active-site residues include aspartate 12 and aspartate 131.

This sequence belongs to the HisA/HisF family. As to quaternary structure, heterodimer of HisH and HisF.

The protein localises to the cytoplasm. The catalysed reaction is 5-[(5-phospho-1-deoxy-D-ribulos-1-ylimino)methylamino]-1-(5-phospho-beta-D-ribosyl)imidazole-4-carboxamide + L-glutamine = D-erythro-1-(imidazol-4-yl)glycerol 3-phosphate + 5-amino-1-(5-phospho-beta-D-ribosyl)imidazole-4-carboxamide + L-glutamate + H(+). It participates in amino-acid biosynthesis; L-histidine biosynthesis; L-histidine from 5-phospho-alpha-D-ribose 1-diphosphate: step 5/9. Its function is as follows. IGPS catalyzes the conversion of PRFAR and glutamine to IGP, AICAR and glutamate. The HisF subunit catalyzes the cyclization activity that produces IGP and AICAR from PRFAR using the ammonia provided by the HisH subunit. The chain is Imidazole glycerol phosphate synthase subunit HisF from Methanosphaerula palustris (strain ATCC BAA-1556 / DSM 19958 / E1-9c).